The chain runs to 658 residues: ATP-dependent RNA helicase DDX3Y (658 aa).

The segment at 1–143 is disordered; sequence MSQVAAESTA…DWSKPLPPSE (143 aa). Ser-2 bears the N-acetylserine mark. Residues 45 to 69 are compositionally biased toward basic and acidic residues; it reads RNRETSKGVCDKDSSGWSCSKDKDA. Residue Lys-56 is modified to N6-acetyllysine. Ser-86 and Ser-90 each carry phosphoserine. A compositionally biased stretch (basic and acidic residues) spans 94–129; sequence GRFDDHGRNDYDGIGGRDRTGFGKFERSGHSRWSDR. Position 101 is an omega-N-methylarginine (Arg-101). Position 104 is a phosphotyrosine (Tyr-104). Arg-110 bears the Omega-N-methylarginine mark. An N6-acetyllysine modification is found at Lys-117. Ser-130 and Ser-182 each carry phosphoserine. A Q motif motif is present at residues 179-207; it reads ENFSDIEMGEIIMGNIELTRYTRPTPVQK. 199–206 contacts ATP; the sequence is YTRPTPVQ. The 193-residue stretch at 210–402 folds into the Helicase ATP-binding domain; it reads IPIIKEKRDL…RDFLDEYIFL (193 aa). Lys-214 is covalently cross-linked (Glycyl lysine isopeptide (Lys-Gly) (interchain with G-Cter in SUMO2)). 223-230 is a binding site for ATP; the sequence is AQTGSGKT. Residues 346-349 carry the DEAD box motif; the sequence is DEAD. Residues 413-574 enclose the Helicase C-terminal domain; sequence NITQKVVWVE…EVPSWLESMA (162 aa). Ser-455 is modified (phosphoserine). Arg-590 bears the Omega-N-methylarginine mark. Phosphoserine occurs at positions 592 and 603. The disordered stretch occupies residues 597–627; the sequence is ARDYRQSSGSANAGFNSNRANSSRSSGSSHN. A compositionally biased stretch (low complexity) spans 603 to 627; it reads SSGSANAGFNSNRANSSRSSGSSHN. An omega-N-methylarginine mark is found at Arg-615 and Arg-628.

It belongs to the DEAD box helicase family. DDX3/DED1 subfamily. Found in heart, brain, liver, skeletal muscle, kidney and testis. Low expression detected in lung. In testis, expressed in all types of spermatogenic cells including spermatogonia, spermatocytes, spermatids and somatic Sertoli cells within the seminiferous tubules. Also expressed in Leydig cells and other interstitial cells.

The protein localises to the cytoplasm. It is found in the nucleus. The enzyme catalyses ATP + H2O = ADP + phosphate + H(+). In terms of biological role, probable ATP-dependent RNA helicase. During immune response, may enhance IFNB1 expression via IRF3/IRF7 pathway. The protein is ATP-dependent RNA helicase DDX3Y (Ddx3y) of Mus musculus (Mouse).